The following is a 131-amino-acid chain: Snaclec bitiscetin subunit alpha (131 aa).

3 cysteine pairs are disulfide-bonded: C4–C15, C32–C125, and C100–C117. In terms of domain architecture, C-type lectin spans 11–126; that stretch reads YKGHCYKVFK…CGEKNPFICK (116 aa).

It belongs to the snaclec family. In terms of assembly, heterodimer of subunits alpha and beta; disulfide-linked. In terms of tissue distribution, expressed by the venom gland.

It localises to the secreted. Functionally, snaclec that binds to von Willebrand factor (VWF) and induces its interaction with GPIbalpha (GP1BA) (via the vWF A1 domain), resulting in platelet aggregation. The protein is Snaclec bitiscetin subunit alpha of Bitis arietans (African puff adder).